The primary structure comprises 248 residues: Adenosylcobinamide-GDP ribazoletransferase (248 aa).

The next 7 membrane-spanning stretches (helical) occupy residues 24–44, 70–90, 106–126, 134–154, 168–188, 189–209, and 228–248; these read EINLKKGSALLPFVGVIIGAW, IIITGGFHVDALADTADGLFS, VGANGVIAICFYFLFYGSLFL, IGWLFFVLPIVAKGVTMLLFA, IFLGVPWWPVVIAQVIVLVAL, GAFFSYIGVIAYAGVILFTII, and AGGQMGQLICLFCLVLLWGLI.

It belongs to the CobS family. The cofactor is Mg(2+).

The protein resides in the cell membrane. It catalyses the reaction alpha-ribazole + adenosylcob(III)inamide-GDP = adenosylcob(III)alamin + GMP + H(+). It carries out the reaction alpha-ribazole 5'-phosphate + adenosylcob(III)inamide-GDP = adenosylcob(III)alamin 5'-phosphate + GMP + H(+). It functions in the pathway cofactor biosynthesis; adenosylcobalamin biosynthesis; adenosylcobalamin from cob(II)yrinate a,c-diamide: step 7/7. Its function is as follows. Joins adenosylcobinamide-GDP and alpha-ribazole to generate adenosylcobalamin (Ado-cobalamin). Also synthesizes adenosylcobalamin 5'-phosphate from adenosylcobinamide-GDP and alpha-ribazole 5'-phosphate. This chain is Adenosylcobinamide-GDP ribazoletransferase, found in Listeria monocytogenes serotype 4b (strain F2365).